The sequence spans 354 residues: Methionine import ATP-binding protein MetN (354 aa).

Residues Leu8–Ile250 enclose the ABC transporter domain. Gly42–Ser49 lines the ATP pocket.

Belongs to the ABC transporter superfamily. Methionine importer (TC 3.A.1.24) family. As to quaternary structure, the complex is composed of two ATP-binding proteins (MetN), two transmembrane proteins (MetI) and a solute-binding protein (MetQ).

It localises to the cell membrane. It catalyses the reaction L-methionine(out) + ATP + H2O = L-methionine(in) + ADP + phosphate + H(+). The catalysed reaction is D-methionine(out) + ATP + H2O = D-methionine(in) + ADP + phosphate + H(+). Part of the ABC transporter complex MetNIQ involved in methionine import. Responsible for energy coupling to the transport system. The chain is Methionine import ATP-binding protein MetN from Streptococcus pyogenes serotype M1.